We begin with the raw amino-acid sequence, 271 residues long: Eukaryotic translation initiation factor 2 subunit beta (271 aa).

Residues 223–247 (CLGCQSPDTILSKENRLFFLRCEKC) form a C4-type zinc finger.

The protein belongs to the eIF-2-beta/eIF-5 family. As to quaternary structure, eukaryotic translation initiation factor 2 eIF2 is a heterotrimeric complex composed of an alpha, a beta and a gamma subunit.

It localises to the cytoplasm. The protein resides in the cytosol. Functionally, component of the eIF2 complex that functions in the early steps of protein synthesis by forming a ternary complex with GTP and initiator tRNA. This complex binds to a 40S ribosomal subunit, followed by mRNA binding to form a 43S pre-initiation complex (43S PIC). Junction of the 60S ribosomal subunit to form the 80S initiation complex is preceded by hydrolysis of the GTP bound to eIF2 and release of an eIF2-GDP binary complex. In order for eIF2 to recycle and catalyze another round of initiation, the GDP bound to eIF2 must exchange with GTP by way of a reaction catalyzed by eIF2B. This is Eukaryotic translation initiation factor 2 subunit beta from Malus domestica (Apple).